The primary structure comprises 122 residues: MAENVVNDILKWLETQLQRNEGIKIDTIANKSGYSKWHLQRIFKDFKGCTLGEYVRKRRLLEAAKSLQEKDMSILDIALMYGFSSQATFTRIFKKHFNTTPAKFRENGTMPDTHCFMSCETH.

The HTH araC/xylS-type domain maps to 7 to 107; sequence NDILKWLETQ…NTTPAKFREN (101 aa). DNA-binding regions (H-T-H motif) lie at residues 26–47 and 74–97; these read DTIA…KDFK and ILDI…KKHF.

In terms of biological role, upon expression in E.coli strain KY2563 confers resistance to antibiotics ofloxacin, ciprofloxacin, tetracycline, chloramphenicol, and ceftazidime (increases minimal inhibitory concentration by 8-32 times); also decreases expression of OmpF. The polypeptide is Probable transcription factor PqrA (Proteus vulgaris).